Reading from the N-terminus, the 192-residue chain is Hydrogenase expression/formation protein HupD (192 aa).

3 residues coordinate Ni(2+): E23, D69, and H100.

The protein belongs to the peptidase A31 family.

Functionally, not known. Could be involved in the processing of hydrogenase. This is Hydrogenase expression/formation protein HupD (hupD) from Bradyrhizobium diazoefficiens (strain JCM 10833 / BCRC 13528 / IAM 13628 / NBRC 14792 / USDA 110).